Here is a 703-residue protein sequence, read N- to C-terminus: Neoverrucotoxin subunit alpha (703 aa).

At S2 the chain carries N-acetylserine. The B30.2/SPRY domain maps to 508-703 (PRMPFVQGYK…RFDHGTVRLL (196 aa)).

This sequence belongs to the SNTX/VTX toxin family. Heterodimer of alpha and beta subunits. Post-translationally, not glycosylated. Four intrachain disulfide linkages are present in the heterodimer. No interchain disulfide bound links the two subunits. As to expression, expressed by the venom gland.

The protein resides in the secreted. In terms of biological role, has hemolytic and lethal activities. Its hemolytic activity is inhibited by anionic lipids, especially potently by cardiolipin. In Synanceia verrucosa (Reef stonefish), this protein is Neoverrucotoxin subunit alpha.